The following is an 82-amino-acid chain: Small ribosomal subunit protein bS16 (82 aa).

The protein belongs to the bacterial ribosomal protein bS16 family.

In Haemophilus ducreyi (strain 35000HP / ATCC 700724), this protein is Small ribosomal subunit protein bS16.